The chain runs to 512 residues: Probable pectinesterase/pectinesterase inhibitor 54 (512 aa).

Residues 1–24 form the signal peptide; the sequence is MGVIDMVLFWVLLVNALLIVDASS. The interval 29-193 is pectinesterase inhibitor 54; the sequence is FAYQNEMQRH…SRLVSNSLTL (165 aa). Residues asparagine 71 and asparagine 131 are each glycosylated (N-linked (GlcNAc...) asparagine). Residues 229–496 form a pectinesterase 54 region; that stretch reads HVVVAKDGSG…FSVVKRRNGE (268 aa). Glutamine 302 provides a ligand contact to substrate. Catalysis depends on aspartate 325, which acts as the Proton donor; for pectinesterase activity. The cysteines at positions 339 and 359 are disulfide-linked. Residue aspartate 346 is the Nucleophile; for pectinesterase activity of the active site. Substrate is bound by residues arginine 415 and tryptophan 417.

In the N-terminal section; belongs to the PMEI family. It in the C-terminal section; belongs to the pectinesterase family. In terms of tissue distribution, expressed in siliques.

The protein localises to the secreted. Its subcellular location is the cell wall. It carries out the reaction [(1-&gt;4)-alpha-D-galacturonosyl methyl ester](n) + n H2O = [(1-&gt;4)-alpha-D-galacturonosyl](n) + n methanol + n H(+). Its pathway is glycan metabolism; pectin degradation; 2-dehydro-3-deoxy-D-gluconate from pectin: step 1/5. Acts in the modification of cell walls via demethylesterification of cell wall pectin. In Arabidopsis thaliana (Mouse-ear cress), this protein is Probable pectinesterase/pectinesterase inhibitor 54 (PME54).